A 517-amino-acid polypeptide reads, in one-letter code: Ribonuclease Y (517 aa).

The chain crosses the membrane as a helical span at residues 2-22; sequence EILVYIIIGIAIFILSLLVGI. The 61-residue stretch at 207–267 folds into the KH domain; it reads TTSTVALPTD…LRREIAKRTL (61 aa). Residues 333–426 form the HD domain; sequence VLEHSIEVAQ…VAASDALSAS (94 aa).

It belongs to the RNase Y family.

It localises to the cell membrane. Endoribonuclease that initiates mRNA decay. This chain is Ribonuclease Y, found in Petrotoga mobilis (strain DSM 10674 / SJ95).